The following is a 334-amino-acid chain: NH(3)-dependent NAD(+) synthetase (334 aa).

47–54 (GLSGGIDS) is an ATP binding site. Residue Asp-53 participates in Mg(2+) binding. A deamido-NAD(+)-binding site is contributed by Arg-183. Residue Thr-203 coordinates ATP. Glu-208 lines the Mg(2+) pocket. Residues Lys-216 and Asp-223 each contribute to the deamido-NAD(+) site. ATP contacts are provided by Lys-232 and Thr-254.

Belongs to the NAD synthetase family. As to quaternary structure, homodimer.

The enzyme catalyses deamido-NAD(+) + NH4(+) + ATP = AMP + diphosphate + NAD(+) + H(+). Its pathway is cofactor biosynthesis; NAD(+) biosynthesis; NAD(+) from deamido-NAD(+) (ammonia route): step 1/1. Its function is as follows. Catalyzes the ATP-dependent amidation of deamido-NAD to form NAD. Uses ammonia as a nitrogen source. In Rhizobium meliloti (strain 1021) (Ensifer meliloti), this protein is NH(3)-dependent NAD(+) synthetase.